The primary structure comprises 301 residues: MEKSIKIGFIGLGAMGKPMAINLLKEGVTVYAFDLMEANVAAVVAQGAQACENNQKVAAASDIIFTSLPNAGIVETVMNGPGGVLSACKAGTVIVDMSSVSPSSTLKMAKVAAEKGIDYVDAPVSGGTKGAEAGTLTIMVGASEAVFEKIQPVLSVIGKDIYHVGDTGAGDAVKIVNNLLLGCNMASLAEALVLGVKCGLKPETMQEIIGKSSGRSYAMEAKMEKFIMSGDFAGGFAMDLQHKDLGLALEAGKEGNVPLPMTAMATQIFEGGRAMGLGREDMSAVIKVWEQMTGVSVSGGQ.

NAD(+) contacts are provided by residues 8–22 (GFIGLGAMGKPMAIN) and S99. K174 is an active-site residue. K243 is an NAD(+) binding site.

It belongs to the HIBADH-related family. Homotetramer.

It catalyses the reaction (S)-2-hydroxymethylglutarate + NAD(+) = 2-formylglutarate + NADH + H(+). The protein operates within cofactor degradation; nicotinate degradation; propanoate and pyruvate from 6-hydroxynicotinate: step 3/8. In terms of biological role, catalyzes the conversion of 2-formylglutarate to (S)-2-hydroxymethylglutarate. Has very low activity with (S)-3-hydroxyisobutyrate. This Eubacterium barkeri (Clostridium barkeri) protein is 2-(hydroxymethyl)glutarate dehydrogenase.